The following is a 624-amino-acid chain: Protein NRT1/ PTR FAMILY 6.1 (624 aa).

The tract at residues 1–20 (MVASEIKSPVSVPETPGSSS) is disordered. A run of 2 helical transmembrane segments spans residues 83–100 (MAYFGLSVNMVAFMFYVM) and 114–134 (FLGISQASSVLGGFLADAYLG). Thr138 carries the post-translational modification Phosphothreonine. Transmembrane regions (helical) follow at residues 139–159 (IAIFTTMYLVGLIGITLGASL), 184–204 (SWQMLYLYTVLYITGFGAAGI), 230–250 (FFNFFYLSVTLGAIIAFTLVV), 258–278 (WGMAFGTLAVAMGISNALFFA), 378–398 (LIPIPTCTIMLSLVLTEYLTL), 422–442 (VFPGLSIFLILSLYYSVFVPI), 459–479 (VGIGLAVSIISVAWAGLFENY), 504–524 (WLLIQYCLIGIAEVFCIVGLL), 537–557 (SIGSAYAALAGGLGCFAATIL), and 585–605 (CLYWLLTLLSFLNFCVFLWSA).

Belongs to the major facilitator superfamily. Proton-dependent oligopeptide transporter (POT/PTR) (TC 2.A.17) family. Expressed in flower and siliques.

Its subcellular location is the membrane. The protein is Protein NRT1/ PTR FAMILY 6.1 (NPF6.1) of Arabidopsis thaliana (Mouse-ear cress).